Reading from the N-terminus, the 219-residue chain is Protein VERNALIZATION 2 (219 aa).

In terms of domain architecture, CCT spans 138–180; that stretch reads REAKVMRYREKKKRRRYEKQIRYESRKAYAEMRPRVKGRFAKV.

In terms of tissue distribution, mainly expressed in leaves, and at low levels in the shoot apical meristem (SAM).

It localises to the nucleus. Functionally, involved in the regulation of vernalization; this process in essential for flowering in cv. Bd29-1 but seems do not occur in cv. Bd21. This is Protein VERNALIZATION 2 from Brachypodium distachyon (Purple false brome).